A 367-amino-acid chain; its full sequence is MSQNQTTIAPQPGIMEISLYEGGASKVAGVENVVKLSSNENPFGPSDKAREAMIRAAHGLHRYPNTDHAGLRGAIGEVHGLDPDRIICGVGSDEIIHFLCQAYAGPGTEVLFTEHGFLMYRISAHAAGAIPVQVAERDRVTDIDALIAGATPRTRLIFVANPNNPTGTMVGLPELERLARAVPQAILVVDAAYAEYVGDYDGGAELATRLPNVFMTRTFSKIYGLGGLRVGWGYGPREIVDVLNRIRGPFNLSNVALEGAEAAMRDREHIARCQAENARMRAWLAEALAEKGVPSDTSCANFILARFADAETAGACDEYLKTQGLIVRRVAGYGLPHCLRITIGDEASCRRVAHVIGQYMAERAESR.

Lysine 221 bears the N6-(pyridoxal phosphate)lysine mark.

The protein belongs to the class-II pyridoxal-phosphate-dependent aminotransferase family. Histidinol-phosphate aminotransferase subfamily. As to quaternary structure, homodimer. The cofactor is pyridoxal 5'-phosphate.

The enzyme catalyses L-histidinol phosphate + 2-oxoglutarate = 3-(imidazol-4-yl)-2-oxopropyl phosphate + L-glutamate. It functions in the pathway amino-acid biosynthesis; L-histidine biosynthesis; L-histidine from 5-phospho-alpha-D-ribose 1-diphosphate: step 7/9. In Paracoccus denitrificans (strain Pd 1222), this protein is Histidinol-phosphate aminotransferase.